We begin with the raw amino-acid sequence, 690 residues long: Proprotein convertase subtilisin/kexin type 9 (690 aa).

Positions 1-28 are cleaved as a signal peptide; sequence MGTVSSRRSWWPLPLLLLLLLGPAGARA. A propeptide spanning residues 29-150 is cleaved from the precursor; it reads QEDEDGDYEE…IEEDSSVFAQ (122 aa). Sulfotyrosine is present on tyrosine 36. A Phosphoserine modification is found at serine 45. The region spanning 75-147 is the Inhibitor I9 domain; it reads TYVVVLKEET…VDYIEEDSSV (73 aa). Residues 153–459 enclose the Peptidase S8 domain; sequence PWNLERITPP…GWQLFCRTVW (307 aa). Active-site charge relay system residues include aspartate 184 and histidine 224. 2 disulfide bridges follow: cysteine 221–cysteine 253 and cysteine 321–cysteine 356. Serine 384 (charge relay system) is an active-site residue. The tract at residues 448–690 is C-terminal domain; that stretch reads GAGWQLFCRT…HLAQASQELQ (243 aa). Cystine bridges form between cysteine 455–cysteine 525, cysteine 475–cysteine 524, and cysteine 484–cysteine 507. Asparagine 531 is a glycosylation site (N-linked (GlcNAc...) asparagine). Intrachain disulfides connect cysteine 532/cysteine 599, cysteine 550/cysteine 598, cysteine 560/cysteine 586, cysteine 606/cysteine 677, cysteine 624/cysteine 676, and cysteine 633/cysteine 652. Serine 686 is modified (phosphoserine).

Belongs to the peptidase S8 family. In terms of assembly, monomer. Can self-associate to form dimers and higher multimers which may have increased LDLR degrading activity. The precursor protein but not the mature protein may form multimers. Interacts with APOB, VLDLR, LRP8/APOER2 and BACE1. The full-length immature form (pro-PCSK9) interacts with SCNN1A, SCNN1B and SCNN1G. The pro-PCSK9 form (via C-terminal domain) interacts with LDLR. Interacts (via the C-terminal domain) with ANXA2 (via repeat Annexin 1); the interaction inhibits the degradation of LDLR. It depends on Ca(2+) as a cofactor. Post-translationally, cleavage by furin and PCSK5 generates a truncated inactive protein that is unable to induce LDLR degradation. Undergoes autocatalytic cleavage in the endoplasmic reticulum to release the propeptide from the N-terminus and the cleavage of the propeptide is strictly required for its maturation and activation. The cleaved propeptide however remains associated with the catalytic domain through non-covalent interactions, preventing potential substrates from accessing its active site. As a result, it is secreted from cells as a propeptide-containing, enzymatically inactive protein. In terms of processing, phosphorylation protects the propeptide against proteolysis.

It is found in the cytoplasm. Its subcellular location is the secreted. It localises to the endosome. The protein localises to the lysosome. The protein resides in the cell surface. It is found in the endoplasmic reticulum. Its subcellular location is the golgi apparatus. Its activity is regulated as follows. Its proteolytic activity is autoinhibited by the non-covalent binding of the propeptide to the catalytic domain. Inhibited by EGTA. Its function is as follows. Crucial player in the regulation of plasma cholesterol homeostasis. Binds to low-density lipid receptor family members: low density lipoprotein receptor (LDLR), very low density lipoprotein receptor (VLDLR), apolipoprotein E receptor (LRP1/APOER) and apolipoprotein receptor 2 (LRP8/APOER2), and promotes their degradation in intracellular acidic compartments. Acts via a non-proteolytic mechanism to enhance the degradation of the hepatic LDLR through a clathrin LDLRAP1/ARH-mediated pathway. May prevent the recycling of LDLR from endosomes to the cell surface or direct it to lysosomes for degradation. Can induce ubiquitination of LDLR leading to its subsequent degradation. Inhibits intracellular degradation of APOB via the autophagosome/lysosome pathway in a LDLR-independent manner. Involved in the disposal of non-acetylated intermediates of BACE1 in the early secretory pathway. Inhibits epithelial Na(+) channel (ENaC)-mediated Na(+) absorption by reducing ENaC surface expression primarily by increasing its proteasomal degradation. Regulates neuronal apoptosis via modulation of LRP8/APOER2 levels and related anti-apoptotic signaling pathways. The polypeptide is Proprotein convertase subtilisin/kexin type 9 (PCSK9) (Pongo pygmaeus (Bornean orangutan)).